The primary structure comprises 509 residues: MDIRAAEISKVIKDQIANFGTEAQVSEVGSVLSVGDGIARIHGLDNVQAGEMVEFANGVQGMALNLEADNVGVVIFGSDAEIKEGDNVKRTETIVDVPVGKALLGRVVDALGNPIDGKGPIETTERRRVELKAPGIIPRKSVDEPVQSGLKAIDALVPVGRGQRELIIGDRQTGKTAVAIDTFINQKTVNESDDESKKLYCVYVAVGQKRSTVAQIVKSLEENGAMEYSIVVAATASEPAPLQYLAPYTGCAMGEFFRDNGMHAVIVYDDLSKQAVAYRQMSLLLRRPPGREAYPGDVFYLHSRLLERAAKMNDDNGGGSLTALPIIETQAGDVSAYIPTNVISITDGQIFLETDLFYQGVRPAINVGLSVSRVGGAAQTKAMKKVSGSIKLELAQYREMAAFAQFGSDLDASTQKLLNRGARLTELLKQPQFSPMPFEEQTVSIFAGTNGYIDDVAVDRVTEYESQMLSFMRSEHADILKTIRDTGKFEDDTKAATVAALDAFAKQFA.

ATP is bound at residue Gly169–Thr176.

This sequence belongs to the ATPase alpha/beta chains family. In terms of assembly, F-type ATPases have 2 components, CF(1) - the catalytic core - and CF(0) - the membrane proton channel. CF(1) has five subunits: alpha(3), beta(3), gamma(1), delta(1), epsilon(1). CF(0) has four main subunits: a(1), b(1), b'(1) and c(9-12).

The protein resides in the cell inner membrane. The catalysed reaction is ATP + H2O + 4 H(+)(in) = ADP + phosphate + 5 H(+)(out). Its function is as follows. Produces ATP from ADP in the presence of a proton gradient across the membrane. The alpha chain is a regulatory subunit. This chain is ATP synthase subunit alpha, found in Erythrobacter litoralis (strain HTCC2594).